Consider the following 33-residue polypeptide: KVFERXELARTLKRLGLDGFRGVSLPNXVXLAR.

Belongs to the glycosyl hydrolase 22 family. As to quaternary structure, monomer.

The catalysed reaction is Hydrolysis of (1-&gt;4)-beta-linkages between N-acetylmuramic acid and N-acetyl-D-glucosamine residues in a peptidoglycan and between N-acetyl-D-glucosamine residues in chitodextrins.. Lysozymes have primarily a bacteriolytic function; those in tissues and body fluids are associated with the monocyte-macrophage system and enhance the activity of immunoagents. The sequence is that of Lysozyme C, spleen isozyme from Equus caballus (Horse).